The following is a 339-amino-acid chain: Fructose-1,6-bisphosphatase class 1 (339 aa).

4 residues coordinate Mg(2+): glutamate 94, aspartate 116, leucine 118, and aspartate 119. Substrate-binding positions include 119 to 122 (DGSS), asparagine 210, and lysine 276. Mg(2+) is bound at residue glutamate 282.

This sequence belongs to the FBPase class 1 family. In terms of assembly, homotetramer. Requires Mg(2+) as cofactor.

The protein localises to the cytoplasm. The enzyme catalyses beta-D-fructose 1,6-bisphosphate + H2O = beta-D-fructose 6-phosphate + phosphate. It participates in carbohydrate biosynthesis; gluconeogenesis. In Burkholderia ambifaria (strain ATCC BAA-244 / DSM 16087 / CCUG 44356 / LMG 19182 / AMMD) (Burkholderia cepacia (strain AMMD)), this protein is Fructose-1,6-bisphosphatase class 1.